Here is a 422-residue protein sequence, read N- to C-terminus: Putative FBD-associated F-box protein At1g55030 (422 aa).

The F-box domain maps to 8–60; sequence TDMISQLPEPLILQILGSLPTKVAITTSVLSKQWQSHWKMMPKLEFDSFLRRL. 3 LRR repeats span residues 132–153, 154–175, and 180–201; these read TLET…VYLK, SLKT…INLL, and NLQD…TIAV. In terms of domain architecture, FBD spans 342–391; that stretch reads EWNQPKNVPECLHHLEKFIWEGYKWKREEIEVAKYILKNTNRLKRAIFSL.

This Arabidopsis thaliana (Mouse-ear cress) protein is Putative FBD-associated F-box protein At1g55030.